The following is a 290-amino-acid chain: Putative transport permease ycf38 (290 aa).

The next 7 helical transmembrane spans lie at 21–41 (VTSF…FIQL), 46–66 (ITLI…GALF), 86–106 (PGIL…PLIF), 133–153 (FFIS…GVFL), 167–187 (FFFL…LALL), 194–213 (LIAV…TALA), and 261–281 (INIG…FLLF). One can recognise an ABC transmembrane type-2 domain in the interval 46 to 284 (ITLISGILQP…LVGFLLFKKI (239 aa)).

Belongs to the ABC-2 integral membrane protein family.

It is found in the plastid. The protein localises to the cyanelle membrane. The sequence is that of Putative transport permease ycf38 (ycf38) from Cyanophora paradoxa.